A 359-amino-acid chain; its full sequence is tRNA/tmRNA (uracil-C(5))-methyltransferase (359 aa).

Positions 183, 211, 216, 232, and 292 each coordinate S-adenosyl-L-methionine. The active-site Nucleophile is C317. E351 serves as the catalytic Proton acceptor.

It belongs to the class I-like SAM-binding methyltransferase superfamily. RNA M5U methyltransferase family. TrmA subfamily.

It carries out the reaction uridine(54) in tRNA + S-adenosyl-L-methionine = 5-methyluridine(54) in tRNA + S-adenosyl-L-homocysteine + H(+). The catalysed reaction is uridine(341) in tmRNA + S-adenosyl-L-methionine = 5-methyluridine(341) in tmRNA + S-adenosyl-L-homocysteine + H(+). In terms of biological role, dual-specificity methyltransferase that catalyzes the formation of 5-methyluridine at position 54 (m5U54) in all tRNAs, and that of position 341 (m5U341) in tmRNA (transfer-mRNA). The sequence is that of tRNA/tmRNA (uracil-C(5))-methyltransferase from Pseudomonas fluorescens (strain SBW25).